The sequence spans 120 residues: Small ribosomal subunit protein uS17m (120 aa).

The transit peptide at Met-1–Thr-20 directs the protein to the mitochondrion.

The protein belongs to the universal ribosomal protein uS17 family. Component of the mitochondrial ribosome small subunit (28S) which comprises a 12S rRNA and about 30 distinct proteins.

Its subcellular location is the mitochondrion. The protein is Small ribosomal subunit protein uS17m (Mrps17) of Mus musculus (Mouse).